The chain runs to 81 residues: Defensin-like protein 313 (81 aa).

Residues 1 to 32 form the signal peptide; it reads MESKRSSSSPLLILITTIMIIFIISGPKSVDA. 3 disulfides stabilise this stretch: Cys34-Cys63, Cys45-Cys74, and Cys49-Cys76.

It belongs to the DEFL family.

Its subcellular location is the secreted. The polypeptide is Defensin-like protein 313 (Arabidopsis thaliana (Mouse-ear cress)).